The sequence spans 117 residues: Large ribosomal subunit protein bL19 (117 aa).

Belongs to the bacterial ribosomal protein bL19 family.

In terms of biological role, this protein is located at the 30S-50S ribosomal subunit interface and may play a role in the structure and function of the aminoacyl-tRNA binding site. This is Large ribosomal subunit protein bL19 from Vibrio cholerae serotype O1 (strain ATCC 39541 / Classical Ogawa 395 / O395).